The following is a 1363-amino-acid chain: Homeobox protein 13 (1363 aa).

The stretch at 15–73 (FVMEQIQQQQQQQQQQQQQQQQQQQQQQQQQQQQLQQQQQQQQQQQQQQQQQQQQQQQN) forms a coiled coil. Disordered stretches follow at residues 66–96 (QQQQ…STVP), 120–177 (SQHA…INGS), 308–437 (INGT…YHGG), 621–731 (LNSP…QHQQ), 765–818 (HHHH…PQHS), 857–911 (SINS…SNSI), 1001–1137 (QNYN…TLIN), 1166–1202 (NFIN…KRMR), and 1270–1341 (ISFG…TLIS). The segment covering 73–96 (NPKMNNQPNETRLPSPPLLNSTVP) has biased composition (polar residues). Residues 132-147 (SLNSSNNNNNNNFNNS) are compositionally biased toward low complexity. Polar residues predominate over residues 148–158 (RPTFSSCSGNS). Composition is skewed to low complexity over residues 159–177 (NNTT…INGS) and 315–326 (SNHSNNNNNNNN). The segment covering 327–339 (NHHHHHHHHHQKR) has biased composition (basic residues). The segment covering 348 to 378 (TNHLTPLPLLHKHTNNNNNINNNNNHNHNNI) has biased composition (low complexity). Over residues 379–393 (LGSPNQLNRSQDFTS) the composition is skewed to polar residues. 5 stretches are compositionally biased toward low complexity: residues 394–408 (KNNN…NNKI), 415–426 (NKGSPNQNSSEN), 641–693 (NNNS…NNNI), 709–731 (HHQQ…QHQQ), and 770–793 (QQQQ…SNHN). Residues 738–789 (QQQLQIQYQQQQTHNNNLNQTQQLYYNHHHHQQQQQQQQQQQQHNNNNNNNN) adopt a coiled-coil conformation. 2 stretches are compositionally biased toward polar residues: residues 794 to 818 (SVLT…PQHS) and 857 to 883 (SINS…QKNR). Low complexity-rich tracts occupy residues 889-911 (ILNS…SNSI), 1001-1031 (QNYN…NNNF), and 1045-1063 (NINN…NNNN). Residues 1064-1078 (KNDKNESEFESKEKL) are compositionally biased toward basic and acidic residues. Residues 1081–1095 (PFGSSIPNIVNNEQL) show a composition bias toward polar residues. 3 stretches are compositionally biased toward low complexity: residues 1096–1116 (SPYS…PQWS), 1123–1137 (TSSS…TLIN), and 1166–1177 (NFINNNSNNNNN). The span at 1179–1195 (EIDDDDEDGIDGIEGED) shows a compositional bias: acidic residues. The segment at residues 1198–1261 (KKRMRKTTRP…NRRTKDKLKN (64 aa)) is a DNA-binding region (homeobox). Positions 1275 to 1294 (SSTSSTQTSTNSPSSQLSPL) are enriched in low complexity. Residues 1297 to 1316 (NMNNNDQQSISTPSLILSQI) are compositionally biased toward polar residues. A compositionally biased stretch (low complexity) spans 1317-1334 (NNNQNNNQNNNNNNNTNN).

It localises to the nucleus. Functionally, putative transcription factor. The polypeptide is Homeobox protein 13 (hbx13) (Dictyostelium discoideum (Social amoeba)).